A 304-amino-acid chain; its full sequence is MERVGMNGAEIIDGKAYAAGLRARVATAVPAFRVAAGRAPGLAVVLVGEDAASQVYVRSKHKATVEAGMESFEHRLPATASETELLALVERLNADDRVDGILVQLPLPPHIDEKKVIATIDPDKDVDGFHVVNAGRLAVGEAGYVPCTPLGCLMLLKDRRGDLSGLEAVVIGRSNIVGKPMAALLLAENCTVTIAHSRTRDLAEVVRRADIVVAAVGRPEMVRGDWIRPGATVIDVGINRVPGAEPGKTRLVGDVAFAEAAAVAGAITPVPGGVGPMTIAVLLRNTLVAAHRRAGVALPEGAIG.

NADP(+) is bound by residues 172–174 (GRS), serine 197, and isoleucine 238.

This sequence belongs to the tetrahydrofolate dehydrogenase/cyclohydrolase family. Homodimer.

It catalyses the reaction (6R)-5,10-methylene-5,6,7,8-tetrahydrofolate + NADP(+) = (6R)-5,10-methenyltetrahydrofolate + NADPH. It carries out the reaction (6R)-5,10-methenyltetrahydrofolate + H2O = (6R)-10-formyltetrahydrofolate + H(+). It functions in the pathway one-carbon metabolism; tetrahydrofolate interconversion. Its function is as follows. Catalyzes the oxidation of 5,10-methylenetetrahydrofolate to 5,10-methenyltetrahydrofolate and then the hydrolysis of 5,10-methenyltetrahydrofolate to 10-formyltetrahydrofolate. This Rhizorhabdus wittichii (strain DSM 6014 / CCUG 31198 / JCM 15750 / NBRC 105917 / EY 4224 / RW1) (Sphingomonas wittichii) protein is Bifunctional protein FolD 3.